The sequence spans 402 residues: Speedy protein E21 (402 aa).

The interval 1-90 (MDRTETRFRK…EPEKELAPEP (90 aa)) is disordered. A compositionally biased stretch (polar residues) spans 16–39 (GKITTSRQLHPQNEQSPQRSTSGY). Over residues 76 to 90 (DESEEEPEKELAPEP) the composition is skewed to acidic residues.

This sequence belongs to the Speedy/Ringo family.

This chain is Speedy protein E21, found in Homo sapiens (Human).